We begin with the raw amino-acid sequence, 230 residues long: Cytidylate kinase (230 aa).

12–20 (GPSGTGKST) lines the ATP pocket.

It belongs to the cytidylate kinase family. Type 1 subfamily.

It is found in the cytoplasm. The catalysed reaction is CMP + ATP = CDP + ADP. It carries out the reaction dCMP + ATP = dCDP + ADP. In Corynebacterium efficiens (strain DSM 44549 / YS-314 / AJ 12310 / JCM 11189 / NBRC 100395), this protein is Cytidylate kinase.